Reading from the N-terminus, the 258-residue chain is Neurotrophin-3 (258 aa).

An N-terminal signal peptide occupies residues 1-18 (MSILFYVIFLAYLRGIQG). Residues 19-139 (NNMDQRSLPE…TNRTSPRRKR (121 aa)) constitute a propeptide that is removed on maturation. Residues 60 to 85 (QSTLPKAEAPREPEQGEATRSEFQPM) form a disordered region. Over residues 67 to 79 (EAPREPEQGEATR) the composition is skewed to basic and acidic residues. N-linked (GlcNAc...) asparagine glycosylation occurs at Asn131. 3 disulfides stabilise this stretch: Cys153-Cys218, Cys196-Cys247, and Cys206-Cys249.

Belongs to the NGF-beta family. In terms of tissue distribution, brain and peripheral tissues.

It is found in the secreted. Functionally, seems to promote the survival of visceral and proprioceptive sensory neurons. The sequence is that of Neurotrophin-3 (Ntf3) from Rattus norvegicus (Rat).